Consider the following 136-residue polypeptide: Histone H3 (136 aa).

A disordered region spans residues 1–43 (MARTKQTARKSTGGKAPRKQLASKAARKSAPSTGGVKKPHRYK). Residue K5 is modified to N6,N6,N6-trimethyllysine; alternate. Position 5 is an N6,N6-dimethyllysine; alternate (K5). Residues K5 and K10 each carry the N6-methyllysine; alternate modification. K10 is subject to N6-acetyllysine; alternate. S11 carries the post-translational modification Phosphoserine. K15 carries the post-translational modification N6,N6-dimethyllysine; alternate. N6-methyllysine; alternate occurs at positions 15, 19, 24, 28, and 37. 5 positions are modified to N6-acetyllysine; alternate: K15, K19, K24, K28, and K37. Residues K28 and K37 each carry the N6,N6,N6-trimethyllysine; alternate modification. N6,N6-dimethyllysine; alternate occurs at positions 28 and 37. K57 and K65 each carry N6-acetyllysine. Position 80 is an N6,N6,N6-trimethyllysine; alternate (K80). K80 is subject to N6,N6-dimethyllysine; alternate. K80 is modified (N6-methyllysine; alternate).

It belongs to the histone H3 family. The nucleosome is a histone octamer containing two molecules each of H2A, H2B, H3 and H4 assembled in one H3-H4 heterotetramer and two H2A-H2B heterodimers. The octamer wraps approximately 147 bp of DNA. Phosphorylated by IPL1 to form H3S10ph. H3S10ph promotes subsequent H3K14ac formation by GCN5 and is required for transcriptional activation through TBP recruitment to the promoters. In terms of processing, mono-, di- and trimethylated by the COMPASS complex to form H3K4me1/2/3. H3K4me activates gene expression by regulating transcription elongation and plays a role in telomere length maintenance. H3K4me enrichment correlates with transcription levels, and occurs in a 5' to 3' gradient with H3K4me3 enrichment at the 5'-end of genes, shifting to H3K4me2 and then H3K4me1. Methylated by SET2 to form H3K36me. H3K36me represses gene expression. Methylated by DOT1 to form H3K79me. H3K79me is required for association of SIR proteins with telomeric regions and for telomeric silencing. The COMPASS-mediated formation of H3K4me2/3 and the DOT1-mediated formation of H3K79me require H2BK123ub1. Post-translationally, acetylation of histone H3 leads to transcriptional activation. H3K14ac formation by GCN5 is promoted by H3S10ph. H3K14ac can also be formed by ESA1. H3K56ac formation occurs predominantly in newly synthesized H3 molecules during G1, S and G2/M of the cell cycle and may be involved in DNA repair.

The protein resides in the nucleus. Its subcellular location is the chromosome. In terms of biological role, core component of nucleosome. Nucleosomes wrap and compact DNA into chromatin, limiting DNA accessibility to the cellular machineries which require DNA as a template. Histones thereby play a central role in transcription regulation, DNA repair, DNA replication and chromosomal stability. DNA accessibility is regulated via a complex set of post-translational modifications of histones, also called histone code, and nucleosome remodeling. In Candida glabrata (strain ATCC 2001 / BCRC 20586 / JCM 3761 / NBRC 0622 / NRRL Y-65 / CBS 138) (Yeast), this protein is Histone H3 (HHT1).